A 204-amino-acid chain; its full sequence is Protein phosphatase 1 regulatory subunit 1B (204 aa).

Met1 carries the post-translational modification N-acetylmethionine. Positions 1–204 (MDPKDRKKIQ…QRPSPSEPGT (204 aa)) are disordered. Residue Thr34 is modified to Phosphothreonine; by PKA. Over residues 41-63 (LSEHSSPEEEASPHQRASGEGHH) the composition is skewed to basic and acidic residues. Ser45 and Ser46 each carry phosphoserine. Thr75 carries the phosphothreonine; by CDK5 modification. The segment covering 89–100 (HLQSISNLNENQ) has biased composition (polar residues). Position 102 is a phosphoserine (Ser102). Residues 109–118 (GELRELGYPR) are compositionally biased toward basic and acidic residues. Composition is skewed to acidic residues over residues 119 to 138 (EEDE…EDSQ) and 170 to 183 (DESE…DQVE). At Ser137 the chain carries Phosphoserine. The residue at position 198 (Ser198) is a Phosphoserine.

Belongs to the protein phosphatase inhibitor 1 family. In terms of processing, dopamine- and cyclic AMP-regulated neuronal phosphoprotein. Post-translationally, phosphorylation of Thr-34 is required for activity.

It is found in the cytoplasm. Inhibitor of protein-phosphatase 1. In Homo sapiens (Human), this protein is Protein phosphatase 1 regulatory subunit 1B (PPP1R1B).